Reading from the N-terminus, the 133-residue chain is Alpha-amylase inhibitor/endochitinase (133 aa).

Residue E30 is the Proton donor of the active site.

It belongs to the glycosyl hydrolase 19 family. Chitinase class I subfamily.

The catalysed reaction is Random endo-hydrolysis of N-acetyl-beta-D-glucosaminide (1-&gt;4)-beta-linkages in chitin and chitodextrins.. In terms of biological role, this protein functions both as an alpha-amylase inhibitor and as a chitinase. The chain is Alpha-amylase inhibitor/endochitinase from Coix lacryma-jobi (Job's tears).